Consider the following 141-residue polypeptide: Hemoglobin subunit alpha (141 aa).

A Globin domain is found at 1-141; it reads VLSPEDKNHV…VSTVLTSKYR (141 aa). Ser-3 bears the Phosphoserine mark. N6-succinyllysine is present on Lys-7. An N6-acetyllysine; alternate modification is found at Lys-16. Position 16 is an N6-succinyllysine; alternate (Lys-16). Tyr-24 is modified (phosphotyrosine). Phosphoserine is present on Ser-35. An N6-succinyllysine modification is found at Lys-40. A Phosphoserine modification is found at Ser-49. His-58 provides a ligand contact to O2. Heme b is bound at residue His-87. The residue at position 102 (Ser-102) is a Phosphoserine. Thr-108 bears the Phosphothreonine mark. A phosphoserine mark is found at Ser-124 and Ser-131. Thr-134 and Thr-137 each carry phosphothreonine. A Phosphoserine modification is found at Ser-138.

The protein belongs to the globin family. Heterotetramer of two alpha chains and two beta chains. As to expression, red blood cells.

Functionally, involved in oxygen transport from the lung to the various peripheral tissues. Its function is as follows. Hemopressin acts as an antagonist peptide of the cannabinoid receptor CNR1. Hemopressin-binding efficiently blocks cannabinoid receptor CNR1 and subsequent signaling. The sequence is that of Hemoglobin subunit alpha (HBA) from Spalax ehrenbergi (Middle East blind mole rat).